A 305-amino-acid polypeptide reads, in one-letter code: Homoserine O-acetyltransferase (305 aa).

Cys-142 (acyl-thioester intermediate) is an active-site residue. 2 residues coordinate substrate: Lys-163 and Ser-192. His-235 serves as the catalytic Proton acceptor. Glu-237 is an active-site residue. Arg-249 lines the substrate pocket.

This sequence belongs to the MetA family.

It localises to the cytoplasm. The enzyme catalyses L-homoserine + acetyl-CoA = O-acetyl-L-homoserine + CoA. The protein operates within amino-acid biosynthesis; L-methionine biosynthesis via de novo pathway; O-acetyl-L-homoserine from L-homoserine: step 1/1. In terms of biological role, transfers an acetyl group from acetyl-CoA to L-homoserine, forming acetyl-L-homoserine. The polypeptide is Homoserine O-acetyltransferase (Acetivibrio thermocellus (strain ATCC 27405 / DSM 1237 / JCM 9322 / NBRC 103400 / NCIMB 10682 / NRRL B-4536 / VPI 7372) (Clostridium thermocellum)).